The chain runs to 226 residues: Putative N-acetylmannosamine-6-phosphate 2-epimerase (226 aa).

It belongs to the NanE family.

The enzyme catalyses an N-acyl-D-glucosamine 6-phosphate = an N-acyl-D-mannosamine 6-phosphate. The protein operates within amino-sugar metabolism; N-acetylneuraminate degradation; D-fructose 6-phosphate from N-acetylneuraminate: step 3/5. Converts N-acetylmannosamine-6-phosphate (ManNAc-6-P) to N-acetylglucosamine-6-phosphate (GlcNAc-6-P). The polypeptide is Putative N-acetylmannosamine-6-phosphate 2-epimerase (Mycoplasma capricolum subsp. capricolum (strain California kid / ATCC 27343 / NCTC 10154)).